Reading from the N-terminus, the 612-residue chain is Protein cereblon (612 aa).

Over residues 1–11 (MDDEETAEIED) the composition is skewed to acidic residues. Disordered regions lie at residues 1-30 (MDDE…GASA), 58-133 (MELI…NPHP), and 181-211 (QERR…PYDV). Residues 69–81 (AADAPDAAASTGS) are compositionally biased toward low complexity. Residues 181–190 (QERRRSRTSE) show a composition bias toward basic and acidic residues. Positions 250-478 (HMLIFLHQHI…IIGSTLKDES (229 aa)) constitute a Lon N-terminal domain. The CULT domain occupies 477–586 (ESVFYCRYCN…LAGSSVRIGK (110 aa)). Zn(2+)-binding residues include cysteine 482, cysteine 485, cysteine 551, and cysteine 554.

It belongs to the CRBN family. As to quaternary structure, likely a component of a DCX (DDB1-CUL4-X-box) protein ligase complex. May interact with pic/DDB1. Post-translationally, ubiquitinated.

The protein localises to the nucleus. Its pathway is protein modification; protein ubiquitination. In terms of biological role, substrate recognition component of a DCX (DDB1-CUL4-X-box) E3 protein ligase complex that mediates the ubiquitination and subsequent proteasomal degradation of target proteins. Has an essential role in mediating growth by negatively regulating insulin signaling. It also has a role in maintaining presynaptic function in the neuromuscular junction synapses of third-instar larvae. In Drosophila willistoni (Fruit fly), this protein is Protein cereblon.